The primary structure comprises 65 residues: Large ribosomal subunit protein bL35 (65 aa).

The disordered stretch occupies residues 20 to 42; it reads GKVRRHHANASHIMTTKTTKRKR.

The protein belongs to the bacterial ribosomal protein bL35 family.

This Syntrophus aciditrophicus (strain SB) protein is Large ribosomal subunit protein bL35.